The primary structure comprises 488 residues: E3 ubiquitin-protein ligase TRIM39 (488 aa).

The segment at 29 to 70 (CSVCLEYLKEPVIIECGHNFCKACITRWWEDLERDFPCPVCR) adopts an RING-type zinc-finger fold. The B box-type zinc-finger motif lies at 102-143 (RDESLCSQHHEPLSLFCYEDQEAVCLICAISHTHRAHTVVPM). Residues cysteine 107, histidine 110, cysteine 129, and histidine 135 each contribute to the Zn(2+) site. Residues 181-250 (ELKRLVESRR…AHLAAEVEGK (70 aa)) adopt a coiled-coil conformation. 2 interaction with CDKN1A regions span residues 268–307 (KCEK…QLIA) and 359–488 (TSGR…TDWE). The B30.2/SPRY domain maps to 289 to 484 (SHFPRQYFAL…NAAPLTIRPP (196 aa)).

This sequence belongs to the TRIM/RBCC family. Interacts with MOAP1. Interacts with CDKN1A. Autoubiquitinated.

It localises to the cytoplasm. The protein resides in the cytosol. It is found in the mitochondrion. The protein localises to the nucleus. It catalyses the reaction S-ubiquitinyl-[E2 ubiquitin-conjugating enzyme]-L-cysteine + [acceptor protein]-L-lysine = [E2 ubiquitin-conjugating enzyme]-L-cysteine + N(6)-ubiquitinyl-[acceptor protein]-L-lysine.. Its pathway is protein modification; protein ubiquitination. Its function is as follows. E3 ubiquitin-protein ligase. May facilitate apoptosis by inhibiting APC/C-Cdh1-mediated poly-ubiquitination and subsequent proteasome-mediated degradation of the pro-apoptotic protein MOAP1. Regulates the G1/S transition of the cell cycle and DNA damage-induced G2 arrest by stabilizing CDKN1A/p21. Positively regulates CDKN1A/p21 stability by competing with DTL for CDKN1A/p21 binding, therefore disrupting DCX(DTL) E3 ubiquitin ligase complex-mediated CDKN1A/p21 ubiquitination and degradation. In Rattus norvegicus (Rat), this protein is E3 ubiquitin-protein ligase TRIM39 (Trim39).